The chain runs to 868 residues: Translation initiation factor IF-2 (868 aa).

Residues S199–V209 show a composition bias toward basic and acidic residues. A disordered region spans residues S199–E269. Basic residues predominate over residues R249–G260. One can recognise a tr-type G domain in the interval G368 to K537. Residues G377 to T384 form a G1 region. G377–T384 is a GTP binding site. The interval G402–H406 is G2. Positions D423–G426 are G3. Residues D423 to H427 and N477 to D480 each bind GTP. Residues N477–D480 are G4. The tract at residues S513 to K515 is G5.

Belongs to the TRAFAC class translation factor GTPase superfamily. Classic translation factor GTPase family. IF-2 subfamily.

It is found in the cytoplasm. In terms of biological role, one of the essential components for the initiation of protein synthesis. Protects formylmethionyl-tRNA from spontaneous hydrolysis and promotes its binding to the 30S ribosomal subunits. Also involved in the hydrolysis of GTP during the formation of the 70S ribosomal complex. This is Translation initiation factor IF-2 from Legionella pneumophila (strain Paris).